The sequence spans 632 residues: MTASATSTEGQEAASTSGFWGLTLGSIGVVFGDIGTSPLYAFREAAHGAAHGEPVSRMIVLGVLSLILWSLFIVVTAKYVLLLLRADNNGEGGTLSLMALGQRALGRRSMFLMSLGVIGASMFIGDSMITPAISVLSAVEGLKLAAPALEHYVVPLTVFILVVLFAVQSKGTARVATAFGPVMVLWFASLAVMGIVHITDDPSVLAAINPYYAVQFLLSHGTIGLVTLGAVFLAVTGGEALYADLGHFGRKPIQSAWLFFVLPSLLINYFGQGALVLSDPAAIENSFYRMVPELLLLPLVVLATAATVIASQAVITGAYSLVSQAVQLGLLPRFEVRYTSESHAGQIYLPRVNRLLLIGVMLLVLLFRTSSNLASAYGIAVSTTMVADGIMGFVVIWKLWNLRAAVAAAIIVPFVIVDLSFFSANLLKLFEGAWVPLLFGAAMAVTIWTWRRGSAILVLKTRKIEVPLDDLIGSLEKRPPHIVKGTAVFLTSDPTSVPTALLHNLKHNKVLHEHNVILTIETAQTPRVDVSERVRMEKISEKFSKVRLRFGFMESPNVPRALAVARKLGWQFDIMSTSFFVSRRSLKPSSQSGMPSWQDHLFIALSRSANDATDYFQIPTGRVVEVGTQVTI.

The next 12 helical transmembrane spans lie at 19–39 (FWGL…TSPL), 58–78 (MIVL…VTAK), 110–130 (MFLM…SMIT), 147–167 (PALE…LFAV), 178–198 (AFGP…IVHI), 216–236 (FLLS…LAVT), 257–277 (WLFF…ALVL), 290–310 (MVPE…TVIA), 347–367 (IYLP…VLLF), 377–397 (YGIA…VVIW), 404–424 (AAVA…FFSA), and 429–449 (LFEG…TIWT).

It belongs to the HAK/KUP transporter (TC 2.A.72) family.

It is found in the cell inner membrane. The catalysed reaction is K(+)(in) + H(+)(in) = K(+)(out) + H(+)(out). Functionally, transport of potassium into the cell. Likely operates as a K(+):H(+) symporter. This chain is Probable potassium transport system protein Kup 2, found in Bradyrhizobium sp. (strain BTAi1 / ATCC BAA-1182).